Consider the following 295-residue polypeptide: Putative xyloglucan endotransglucosylase/hydrolase protein 1 (295 aa).

The signal sequence occupies residues 1–24 (MNKMEYLSIFGFVSVLYLIIRVDA). In terms of domain architecture, GH16 spans 27–225 (YEVNGIDQSK…WSLAPFKANF (199 aa)). Residue E113 is the Nucleophile of the active site. The Proton donor role is filled by E117. Xyloglucan contacts are provided by residues E117, 129–131 (QTN), and 139–141 (NRE). N180 carries an N-linked (GlcNAc...) asparagine glycan. Residues 204–205 (NW) and G209 each bind xyloglucan. 2 N-linked (GlcNAc...) asparagine glycosylation sites follow: N215 and N229. Cystine bridges form between C233-C242 and C278-C291. Residue R283 coordinates xyloglucan.

It belongs to the glycosyl hydrolase 16 family. XTH group 1 subfamily. Post-translationally, contains at least one intrachain disulfide bond essential for its enzymatic activity.

The protein localises to the secreted. The protein resides in the cell wall. Its subcellular location is the extracellular space. It localises to the apoplast. The enzyme catalyses breaks a beta-(1-&gt;4) bond in the backbone of a xyloglucan and transfers the xyloglucanyl segment on to O-4 of the non-reducing terminal glucose residue of an acceptor, which can be a xyloglucan or an oligosaccharide of xyloglucan.. Its function is as follows. May catalyze xyloglucan endohydrolysis (XEH) and/or endotransglycosylation (XET). Cleaves and religates xyloglucan polymers, an essential constituent of the primary cell wall, and thereby participates in cell wall construction of growing tissues. This chain is Putative xyloglucan endotransglucosylase/hydrolase protein 1 (XTH1), found in Arabidopsis thaliana (Mouse-ear cress).